The following is a 225-amino-acid chain: ATP synthase subunit a (225 aa).

5 helical membrane-spanning segments follow: residues 16-36, 79-99, 105-125, 176-196, and 202-222; these read LFVY…VAKL, LVAT…IPGF, SLNL…FEGI, LFLL…AYAL, and VLQT…AVAI.

This sequence belongs to the ATPase A chain family. As to quaternary structure, F-type ATPases have 2 components, CF(1) - the catalytic core - and CF(0) - the membrane proton channel. CF(1) has five subunits: alpha(3), beta(3), gamma(1), delta(1), epsilon(1). CF(0) has three main subunits: a(1), b(2) and c(9-12). The alpha and beta chains form an alternating ring which encloses part of the gamma chain. CF(1) is attached to CF(0) by a central stalk formed by the gamma and epsilon chains, while a peripheral stalk is formed by the delta and b chains.

Its subcellular location is the cell inner membrane. Key component of the proton channel; it plays a direct role in the translocation of protons across the membrane. The chain is ATP synthase subunit a from Campylobacter curvus (strain 525.92).